We begin with the raw amino-acid sequence, 788 residues long: 5-methyltetrahydropteroyltriglutamate--homocysteine methyltransferase (788 aa).

Residues 24-27 (RELK) and lysine 140 contribute to the 5-methyltetrahydropteroyltri-L-glutamate site. Residues 463 to 465 (IGS) and glutamate 516 contribute to the L-homocysteine site. L-methionine is bound by residues 463–465 (IGS) and glutamate 516. Residues 547–548 (RC) and tryptophan 593 contribute to the 5-methyltetrahydropteroyltri-L-glutamate site. L-homocysteine is bound at residue aspartate 631. Residue aspartate 631 coordinates L-methionine. Glutamate 637 serves as a coordination point for 5-methyltetrahydropteroyltri-L-glutamate. Residues histidine 673, cysteine 675, and glutamate 697 each coordinate Zn(2+). Histidine 726 serves as the catalytic Proton donor. Residue cysteine 758 participates in Zn(2+) binding.

It belongs to the vitamin-B12 independent methionine synthase family. Requires Zn(2+) as cofactor.

The enzyme catalyses 5-methyltetrahydropteroyltri-L-glutamate + L-homocysteine = tetrahydropteroyltri-L-glutamate + L-methionine. It participates in amino-acid biosynthesis; L-methionine biosynthesis via de novo pathway; L-methionine from L-homocysteine (MetE route): step 1/1. Its function is as follows. Catalyzes the transfer of a methyl group from 5-methyltetrahydrofolate to homocysteine resulting in methionine formation. The sequence is that of 5-methyltetrahydropteroyltriglutamate--homocysteine methyltransferase from Rhodopseudomonas palustris (strain TIE-1).